Here is a 273-residue protein sequence, read N- to C-terminus: 2,3,4,5-tetrahydropyridine-2,6-dicarboxylate N-succinyltransferase (273 aa).

Substrate-binding residues include Arg104 and Asp141.

This sequence belongs to the transferase hexapeptide repeat family. In terms of assembly, homotrimer.

The protein resides in the cytoplasm. It carries out the reaction (S)-2,3,4,5-tetrahydrodipicolinate + succinyl-CoA + H2O = (S)-2-succinylamino-6-oxoheptanedioate + CoA. The protein operates within amino-acid biosynthesis; L-lysine biosynthesis via DAP pathway; LL-2,6-diaminopimelate from (S)-tetrahydrodipicolinate (succinylase route): step 1/3. The chain is 2,3,4,5-tetrahydropyridine-2,6-dicarboxylate N-succinyltransferase from Chromobacterium violaceum (strain ATCC 12472 / DSM 30191 / JCM 1249 / CCUG 213 / NBRC 12614 / NCIMB 9131 / NCTC 9757 / MK).